A 222-amino-acid polypeptide reads, in one-letter code: Probable glutathione-independent glyoxalase hsp3104 (222 aa).

Residues cysteine 124, histidine 125, and glutamate 155 contribute to the active site.

This sequence belongs to the peptidase C56 family. HSP31-like subfamily.

The protein localises to the cytoplasm. The enzyme catalyses methylglyoxal + H2O = (R)-lactate + H(+). Functionally, catalyzes the conversion of methylglyoxal (MG) to D-lactate in a single glutathione (GSH)-independent step. May play a role in detoxifying endogenously produced glyoxals. Involved in protection against reactive oxygen species (ROS). In Schizosaccharomyces pombe (strain 972 / ATCC 24843) (Fission yeast), this protein is Probable glutathione-independent glyoxalase hsp3104.